A 176-amino-acid polypeptide reads, in one-letter code: Inner membrane-spanning protein YciB (176 aa).

The next 6 helical transmembrane spans lie at 3–23 (FLFD…WGIF), 24–44 (TATA…AFRH), 49–69 (TMLW…LVLH), 81–101 (LYWL…NNLI), 121–141 (VAWA…VHNF), and 149–169 (FKLF…SLWL).

It belongs to the YciB family.

The protein resides in the cell inner membrane. Functionally, plays a role in cell envelope biogenesis, maintenance of cell envelope integrity and membrane homeostasis. This is Inner membrane-spanning protein YciB from Burkholderia vietnamiensis (strain G4 / LMG 22486) (Burkholderia cepacia (strain R1808)).